Reading from the N-terminus, the 460-residue chain is Bifunctional protein GlmU (460 aa).

Residues 1 to 229 are pyrophosphorylase; the sequence is MSHYAIILAA…FEESLGVNDR (229 aa). UDP-N-acetyl-alpha-D-glucosamine contacts are provided by residues 8–11, lysine 22, glutamine 72, and 77–78; these read LAAG and GT. Position 102 (aspartate 102) interacts with Mg(2+). Residues glycine 139, glutamate 154, asparagine 169, and asparagine 227 each contribute to the UDP-N-acetyl-alpha-D-glucosamine site. Residue asparagine 227 participates in Mg(2+) binding. The segment at 230 to 250 is linker; sequence VALATAEDVMRRRINKAHMIN. The tract at residues 251 to 460 is N-acetyltransferase; that stretch reads GVTFQNPNAT…KKPHHPSQQK (210 aa). UDP-N-acetyl-alpha-D-glucosamine-binding residues include arginine 332 and lysine 350. Histidine 362 acts as the Proton acceptor in catalysis. Positions 365 and 376 each coordinate UDP-N-acetyl-alpha-D-glucosamine. Residues alanine 379, 385-386, serine 404, alanine 422, and arginine 439 contribute to the acetyl-CoA site; that span reads NY.

This sequence in the N-terminal section; belongs to the N-acetylglucosamine-1-phosphate uridyltransferase family. It in the C-terminal section; belongs to the transferase hexapeptide repeat family. Homotrimer. The cofactor is Mg(2+).

Its subcellular location is the cytoplasm. It catalyses the reaction alpha-D-glucosamine 1-phosphate + acetyl-CoA = N-acetyl-alpha-D-glucosamine 1-phosphate + CoA + H(+). The catalysed reaction is N-acetyl-alpha-D-glucosamine 1-phosphate + UTP + H(+) = UDP-N-acetyl-alpha-D-glucosamine + diphosphate. It functions in the pathway nucleotide-sugar biosynthesis; UDP-N-acetyl-alpha-D-glucosamine biosynthesis; N-acetyl-alpha-D-glucosamine 1-phosphate from alpha-D-glucosamine 6-phosphate (route II): step 2/2. Its pathway is nucleotide-sugar biosynthesis; UDP-N-acetyl-alpha-D-glucosamine biosynthesis; UDP-N-acetyl-alpha-D-glucosamine from N-acetyl-alpha-D-glucosamine 1-phosphate: step 1/1. It participates in bacterial outer membrane biogenesis; LPS lipid A biosynthesis. Its function is as follows. Catalyzes the last two sequential reactions in the de novo biosynthetic pathway for UDP-N-acetylglucosamine (UDP-GlcNAc). The C-terminal domain catalyzes the transfer of acetyl group from acetyl coenzyme A to glucosamine-1-phosphate (GlcN-1-P) to produce N-acetylglucosamine-1-phosphate (GlcNAc-1-P), which is converted into UDP-GlcNAc by the transfer of uridine 5-monophosphate (from uridine 5-triphosphate), a reaction catalyzed by the N-terminal domain. This Streptococcus thermophilus (strain CNRZ 1066) protein is Bifunctional protein GlmU.